A 297-amino-acid chain; its full sequence is Acetaldehyde dehydrogenase (297 aa).

Residue 15 to 18 (SGSI) coordinates NAD(+). Cys-130 acts as the Acyl-thioester intermediate in catalysis. NAD(+)-binding positions include 162–170 (SAGIATREN) and Asn-272.

It belongs to the acetaldehyde dehydrogenase family.

The enzyme catalyses acetaldehyde + NAD(+) + CoA = acetyl-CoA + NADH + H(+). In Burkholderia thailandensis (strain ATCC 700388 / DSM 13276 / CCUG 48851 / CIP 106301 / E264), this protein is Acetaldehyde dehydrogenase (mhpF).